The chain runs to 344 residues: MSSSVASTENIVENMLHPKTTEIYFSLNNGVRIPALGLGTANPHEKLAETKQAVKAAIKAGYRHIDTAWAYETEPFVGEAIKELLEDGSIKREDLFITTKVWPVLWDEVDRSLNESLKALGLEYVDLLLQHWPLCFEKIKDPKGISGLVKTPVDDSGKTMYAADGDYLETYKQLEKIYLDPNDHRVRAIGVSNFSIEYLERLIKECRVKPTVNQVETHPHLPQMELRKFCFMHDILLTAYSPLGSHGAPNLKIPLVKKLAEKYNVTGNDLLISYHIRQGTIVIPRSLNPVRISSSIEFASLTKDELQELNDFGEKYPVRFIDEPFAAILPEFTGNGPNLDNLKY.

The active-site Proton donor is the tyrosine 71. Substrate is bound at residue histidine 131. The residue at position 151 (threonine 151) is a Phosphothreonine. Serine 241–serine 295 serves as a coordination point for NADP(+).

The protein belongs to the aldo/keto reductase family. As to quaternary structure, heterodimer of a heavy chain and a light chain.

It is found in the cytoplasm. The enzyme catalyses D-arabinose + NADP(+) = D-arabinono-1,4-lactone + NADPH + H(+). It catalyses the reaction D-arabinose + NAD(+) = D-arabinono-1,4-lactone + NADH + H(+). Catalyzes the oxidation of D-arabinose, L-xylose, L-fucose and L-galactose in the presence of NADP(+). The sequence is that of D-arabinose dehydrogenase [NAD(P)+] heavy chain (ARA1) from Saccharomyces cerevisiae (strain ATCC 204508 / S288c) (Baker's yeast).